The following is a 2581-amino-acid chain: MADPIMDLFDDPNLFGLDSLTDDSFNQVTQDPIEEALGLPSSLDSLDQMNQDGGSGDVGNSSASDLVPPPEETASTELPKESTAPAPESLTLHDYTTQPTSQEQPAQPVLQTSTPTSGLLQVSKSQEILSQGNPFMGVSATAVSPSNTGGQPSQSAPKIVILKAPPNSSVTGAHVAQIQAQGITSTAQPLVAGTANGGKVTFTKVLTGTPLRPGVSIVSGNTVLATKVPGNQAAVQRIVQPSRPVKQLVLQPVKGSAPAGNPGATGPPLKPAVTLTSTPAQGESKRITLVLQQPQSGGPQGHRHVVLGSLPGKIVLQGNQLAALTQAKSAQGQPAKVVTIQLQVQQPQQKIQIVPQPPSSQPQPQPPPSAQPLTLSSVQQAQIMGPGQNPGQRLSVPLKMVLQPQAGSSQGASSGLSVVKVLSASEVAALSSPASCAPHTAGKTGMEENRRLEHQKKQEKANRIVAEAIARARARGEQNIPRVLNEDELPSVRPEEEGEKKRRKKSSGERLKEEKPKKSKTAAASKTKGKSKLNTITPVVGKKRKRNTSSDNSDVEVMPAQSPREDEESSIQKRRSNRQVKRKKYTEDLDIKITDDEEEEEVDVTGPIKPEPILPEPVPEPDGETLPSMQFFVENPSEEDAAIVDKVLSMRVVKKELPSGQYTEAEEFFVKYKNYSYLHCEWATISQLEKDKRIHQKLKRFKTKMAQMRHFFHEDEEPFNPDYVEVDRILDESHSVDKDNGEPVIYYLVKWCSLPYEDSTWELKEDVDEGKIREFKRIQSRHPELKRVNRPQANAWKKLELSHEYKNRNQLREYQLEGVNWLLFNWYNRQNCILADEMGLGKTIQSIAFLQEVYNVGIHGPFLVIAPLSTITNWEREFNTWTEMNTIVYHGSLASRQMIQQYEMYCKDSRGRLIPGAYKFDALITTFEMILSDCPELREIEWRCVIIDEAHRLKNRNCKLLDSLKHMDLEHKVLLTGTPLQNTVEELFSLLHFLEPSQFPSESEFLKDFGDLKTEEQVQKLQAILKPMMLRRLKEDVEKNLAPKQETIIEVELTNIQKKYYRAILEKNFSFLSKGAGHTNMPNLLNTMMELRKCCNHPYLINGAEEKILMEFREACHIIPQDFHLQAMVRSAGKLVLIDKLLPKLKAGGHKVLIFSQMVRCLDILEDYLIQRRYLYERIDGRVRGNLRQAAIDRFSKPDSDRFVFLLCTRAGGLGINLTAADTCIIFDSDWNPQNDLQAQARCHRIGQSKAVKVYRLITRNSYEREMFDKASLKLGLDKAVLQSMSGRDGNITGIQQFSKKEIEDLLRKGAYAAIMEEDDEGSKFCEEDIDQILLRRTTTITIESEGKGSTFAKASFVASENRTDISLDDPNFWQKWAKKADLDMDLLNSKNNLVIDTPRVRKQTRHFSTLKDDDLVEFSDLESEDDERPRSRRHDRHHTYGRTDCFRVEKHLLVYGWGRWRDILSHGRFKRRMTERDVETICRAILVYCLLHYRGDENIKSFIWDLISPAENGKTKELQNHSGLSIPVPRGRKGKKVKSQSTFDIHKADWIRKYNPDTLFQDESYKKHLKHQCNKVLLRVRMLYYLRQEVIGDQAEKVLGGAIASEIDIWFPVVDQLEVPTTWWDSEADKSLLIGVFKHGYEKYNTMRADPALCFLEKAGRPDDKAIAAEHRVLDNFSDLVEGIDFDKDCEDPEYKPLQGPPKDPDDEGDPLMMMDEEISVIDGDEAPVTQQPGHLFWPPGSALTARLRRLVTAYQRSYKREQMKIEAAERGDRRRRRCEAAFKLKEIARREKQQRWTRREQTDFYRVVSTFGVEYDPDNMQFHWDRFRTFARLDKKTDESLTKYFHGFVAMCRQVCRLPPAAGDEPPDPNLFIEPITEERASRTLYRIELLRRLREQVLCHPLLEDRLALCQPPGLELPKWWEPVRHDGELLRGAARHGVSQTDCNIMQDPDFSFLAARMNYMQNHQAGASAASLSRCSTPLLHQQCTSRTASPSPLRPDVPAEKSPEENAVQVPSLDSLTLKLEDEVVARSRLTPQDYEIRVASSDTAPLSRSVPPVKLEDDDDSDSELDLSKLSPSSSSSSSSSSSSSSSDESEDEKEEKLTADRSRPKLYDEESLLSLTMSQDGFPNEDGEQMTPELLLLQERQRASEWPKDRVLINRIDLVCQAVLSGKWPSNRRSQEMTTGGILGPGNHLLDSPSLTPGEYGDSPVPTPRSSSAASMVEEEASAVTTAAAQFTKLRRGMDEKEFTVQIKDEEGLKLTFQKHRLMANGVMGDGHPLFHKKKGNRKKLVELEVECMEEPNHLDVDLETRIPVINKVDGTLLVGDEAPRRAELDMWLQGHPEFAVDPRFLAYMEERRKQKWQRCKKNNKTELNCLGMEPVQPANSRNGKKGHYAETAFNRVLPGPIAPENSKKRVRRTRPDLSKMMALMQGGSTGSLSLHNTFQHSSSNLQSVSSLGHSSATSASLPFMPFVMGGAAAPPHVDSSTMLHHHHHHPHPHHHHHHHPGLRTTGYPSSPATTTSGTALRLPTLQHEDDDEEEDEDDDDLSQGYDSSERDFSLIDDPMMPANSDSSDDADD.

3 disordered regions span residues 22–114, 253–281, and 349–375; these read DDSF…QTST, VKGSAPAGNPGATGPPLKPAVTLTSTPAQ, and QKIQIVPQPPSSQPQPQPPPSAQPLTL. Composition is skewed to polar residues over residues 42-64 and 94-114; these read SLDSLDQMNQDGGSGDVGNSSAS and DYTTQPTSQEQPAQPVLQTST. Over residues 255–267 the composition is skewed to low complexity; the sequence is GSAPAGNPGATGP. Positions 355-370 are enriched in pro residues; the sequence is PQPPSSQPQPQPPPSA. S432 is modified (phosphoserine). 2 disordered regions span residues 473 to 584 and 596 to 616; these read RARG…KRKK and DEEEEEVDVTGPIKPEPILPE. The segment covering 493–516 has biased composition (basic and acidic residues); it reads RPEEEGEKKRRKKSSGERLKEEKP. A phosphoserine mark is found at S553 and S562. A compositionally biased stretch (basic residues) spans 572-584; the sequence is QKRRSNRQVKRKK. K609 participates in a covalent cross-link: Glycyl lysine isopeptide (Lys-Gly) (interchain with G-Cter in SUMO). Chromo domains follow at residues 642 to 709 and 724 to 790; these read AIVD…AQMR and VEVD…RVNR. In terms of domain architecture, Helicase ATP-binding spans 823–997; the sequence is LFNWYNRQNC…FSLLHFLEPS (175 aa). Position 836-843 (836-843) interacts with ATP; sequence DEMGLGKT. A DEAH box motif is present at residues 948–951; sequence DEAH. The 152-residue stretch at 1137–1288 folds into the Helicase C-terminal domain; it reads LIDKLLPKLK…KAVLQSMSGR (152 aa). Phosphoserine occurs at positions 1420 and 1424. The interval 1692–1713 is disordered; sequence EDPEYKPLQGPPKDPDDEGDPL. The tract at residues 1789–2302 is interaction with FAM124B; sequence IARREKQQRW…LVELEVECME (514 aa). A phosphoserine mark is found at S1976 and S1978. Residues 1988–2016 are disordered; that stretch reads QCTSRTASPSPLRPDVPAEKSPEENAVQV. T1993 carries the phosphothreonine modification. S1995, S1997, and S2008 each carry phosphoserine. Residue K2025 forms a Glycyl lysine isopeptide (Lys-Gly) (interchain with G-Cter in SUMO2) linkage. 2 disordered regions span residues 2047–2118 and 2179–2221; these read SSDT…YDEE and NRRS…SSSA. Over residues 2063–2072 the composition is skewed to acidic residues; the sequence is EDDDDSDSEL. A phosphoserine mark is found at S2068 and S2070. The segment covering 2075–2094 has biased composition (low complexity); that stretch reads SKLSPSSSSSSSSSSSSSSS. The span at 2102 to 2116 shows a compositional bias: basic and acidic residues; that stretch reads EEKLTADRSRPKLYD. Phosphoserine is present on residues S2182, S2200, and S2202. A Phosphothreonine modification is found at T2204. Position 2211 is a phosphoserine (S2211). T2215 carries the post-translational modification Phosphothreonine. Residue S2223 is modified to Phosphoserine. K2256 is covalently cross-linked (Glycyl lysine isopeptide (Lys-Gly) (interchain with G-Cter in SUMO2)). The segment at 2484–2581 is disordered; that stretch reads PHVDSSTMLH…NSDSSDDADD (98 aa). Residues 2492 to 2510 show a composition bias toward basic residues; sequence LHHHHHHPHPHHHHHHHPG. The span at 2513–2528 shows a compositional bias: low complexity; that stretch reads TTGYPSSPATTTSGTA. Phosphoserine is present on S2519. Over residues 2537–2550 the composition is skewed to acidic residues; sequence EDDDEEEDEDDDDL. Positions 2565-2574 are enriched in low complexity; sequence DDPMMPANSD.

It belongs to the SNF2/RAD54 helicase family. CHD8 subfamily. In terms of assembly, interacts with p53/TP53, histone H1 and CTCF. Component of some MLL1/MLL complex, at least composed of the core components KMT2A/MLL1, ASH2L, HCFC1/HCF1, WDR5 and RBBP5, as well as the facultative components BACC1, CHD8, E2F6, HSP70, INO80C, KANSL1, LAS1L, MAX, MCRS1, MGA, KAT8/MOF, PELP1, PHF20, PRP31, RING2, RUVB1/TIP49A, RUVB2/TIP49B, SENP3, TAF1, TAF4, TAF6, TAF7, TAF9 and TEX10. Interacts with CHD7. Interacts with FAM124B. Interacts with CTNNB1. Interacts with PIAS3. Interacts with TLK2. Interacts with HNRNPL in an RNA-dependent manner. Post-translationally, sumoylated.

It is found in the nucleus. It carries out the reaction ATP + H2O = ADP + phosphate + H(+). ATP-dependent chromatin-remodeling factor, it slides nucleosomes along DNA; nucleosome sliding requires ATP. Acts as a transcription repressor by remodeling chromatin structure and recruiting histone H1 to target genes. Suppresses p53/TP53-mediated apoptosis by recruiting histone H1 and preventing p53/TP53 transactivation activity. Acts as a negative regulator of Wnt signaling pathway by regulating beta-catenin (CTNNB1) activity. Negatively regulates CTNNB1-targeted gene expression by being recruited specifically to the promoter regions of several CTNNB1 responsive genes. Involved in both enhancer blocking and epigenetic remodeling at chromatin boundary via its interaction with CTCF. Acts as a suppressor of STAT3 activity by suppressing the LIF-induced STAT3 transcriptional activity. Also acts as a transcription activator via its interaction with ZNF143 by participating in efficient U6 RNA polymerase III transcription. Regulates alternative splicing of a core group of genes involved in neuronal differentiation, cell cycle and DNA repair. Enables H3K36me3-coupled transcription elongation and co-transcriptional RNA processing likely via interaction with HNRNPL. In Rattus norvegicus (Rat), this protein is Chromodomain-helicase-DNA-binding protein 8.